A 264-amino-acid polypeptide reads, in one-letter code: S-adenosylmethionine decarboxylase proenzyme (264 aa).

S111 acts as the Schiff-base intermediate with substrate; via pyruvic acid in catalysis. Position 111 is a pyruvic acid (Ser); by autocatalysis (S111). The active-site Proton acceptor; for processing activity is H116. The active-site Proton donor; for catalytic activity is the C139.

The protein belongs to the prokaryotic AdoMetDC family. Type 2 subfamily. In terms of assembly, heterooctamer of four alpha and four beta chains arranged as a tetramer of alpha/beta heterodimers. Requires pyruvate as cofactor. In terms of processing, is synthesized initially as an inactive proenzyme. Formation of the active enzyme involves a self-maturation process in which the active site pyruvoyl group is generated from an internal serine residue via an autocatalytic post-translational modification. Two non-identical subunits are generated from the proenzyme in this reaction, and the pyruvate is formed at the N-terminus of the alpha chain, which is derived from the carboxyl end of the proenzyme. The post-translation cleavage follows an unusual pathway, termed non-hydrolytic serinolysis, in which the side chain hydroxyl group of the serine supplies its oxygen atom to form the C-terminus of the beta chain, while the remainder of the serine residue undergoes an oxidative deamination to produce ammonia and the pyruvoyl group blocking the N-terminus of the alpha chain.

It carries out the reaction S-adenosyl-L-methionine + H(+) = S-adenosyl 3-(methylsulfanyl)propylamine + CO2. The protein operates within amine and polyamine biosynthesis; S-adenosylmethioninamine biosynthesis; S-adenosylmethioninamine from S-adenosyl-L-methionine: step 1/1. Catalyzes the decarboxylation of S-adenosylmethionine to S-adenosylmethioninamine (dcAdoMet), the propylamine donor required for the synthesis of the polyamines spermine and spermidine from the diamine putrescine. This Geobacillus kaustophilus (strain HTA426) protein is S-adenosylmethionine decarboxylase proenzyme.